The chain runs to 525 residues: GMP synthase [glutamine-hydrolyzing] (525 aa).

In terms of domain architecture, Glutamine amidotransferase type-1 spans 8 to 207; sequence KILILDFGSQ…ALDICGCAAN (200 aa). The active-site Nucleophile is the Cys-85. Catalysis depends on residues His-181 and Glu-183. The GMPS ATP-PPase domain occupies 208–400; it reads WKPSSIIEDA…LGLPYNMLYR (193 aa). 235–241 contributes to the ATP binding site; sequence SGGVDSS.

Homodimer.

The enzyme catalyses XMP + L-glutamine + ATP + H2O = GMP + L-glutamate + AMP + diphosphate + 2 H(+). It functions in the pathway purine metabolism; GMP biosynthesis; GMP from XMP (L-Gln route): step 1/1. Functionally, catalyzes the synthesis of GMP from XMP. The polypeptide is GMP synthase [glutamine-hydrolyzing] (Shewanella putrefaciens (strain CN-32 / ATCC BAA-453)).